The primary structure comprises 340 residues: DNA repair protein RAD51 homolog B (340 aa).

Residues 1–22 form a disordered region; it reads MSSSSAHQKASPPIEEEATEHG. A HhH domain is found at 49–78; sequence TVESVAYSPRKDLLQIKGISEAKVDKIIEA. Position 128–135 (128–135) interacts with ATP; sequence GEFRSGKT.

This sequence belongs to the RecA family. RAD51 subfamily. Self-associates and may interact with XRCC3 homolog. In terms of tissue distribution, highly expressed in mitotic and meiotic tissues, but low levels in differentiated tissues.

It localises to the nucleus. Its function is as follows. Binds to single and double-stranded DNA and exhibits DNA-dependent ATPase activity. Unwinds duplex DNA. Component of the meiotic recombination pathway. Seems to play a role in mediating chromosome homology search, chromosome pairing and synapsis at early stages and probably chromosome crossing-over at later stages in meiosis. Probably is involved in the repair of meiotic double strand breaks (DBSs) and in homologous recombination. The sequence is that of DNA repair protein RAD51 homolog B (RAD51B) from Zea mays (Maize).